The chain runs to 238 residues: 4-hydroxy-tetrahydrodipicolinate reductase (238 aa).

12–17 (GASGRM) serves as a coordination point for NAD(+). NADP(+) is bound at residue Arg40. NAD(+) contacts are provided by residues 93–95 (GTT) and 117–120 (ASNF). The active-site Proton donor/acceptor is the His149. His150 contacts (S)-2,3,4,5-tetrahydrodipicolinate. Lys153 (proton donor) is an active-site residue. 159-160 (GT) contributes to the (S)-2,3,4,5-tetrahydrodipicolinate binding site.

Belongs to the DapB family.

Its subcellular location is the cytoplasm. It catalyses the reaction (S)-2,3,4,5-tetrahydrodipicolinate + NAD(+) + H2O = (2S,4S)-4-hydroxy-2,3,4,5-tetrahydrodipicolinate + NADH + H(+). The enzyme catalyses (S)-2,3,4,5-tetrahydrodipicolinate + NADP(+) + H2O = (2S,4S)-4-hydroxy-2,3,4,5-tetrahydrodipicolinate + NADPH + H(+). It functions in the pathway amino-acid biosynthesis; L-lysine biosynthesis via DAP pathway; (S)-tetrahydrodipicolinate from L-aspartate: step 4/4. Catalyzes the conversion of 4-hydroxy-tetrahydrodipicolinate (HTPA) to tetrahydrodipicolinate. The protein is 4-hydroxy-tetrahydrodipicolinate reductase of Xanthomonas euvesicatoria pv. vesicatoria (strain 85-10) (Xanthomonas campestris pv. vesicatoria).